A 582-amino-acid polypeptide reads, in one-letter code: NAB transcription cofactor mab-10 (582 aa).

Positions 1 to 70 (MSSSSSSSLP…SSSSQRQSTS (70 aa)) are enriched in low complexity. 4 disordered regions span residues 1 to 84 (MSSS…MPTP), 257 to 287 (SDQQSSSTSSVRSVLPSTSSNTSHPELPAGI), 333 to 365 (PPSSTSIQQPSTSFGRSSSITGQEKEGSSSPFL), and 516 to 582 (SRKR…LPES). Residues 83 to 161 (TPTTLSEWQL…EYSQDQTAFN (79 aa)) form an NCD1 region. Low complexity-rich tracts occupy residues 257 to 276 (SDQQSSSTSSVRSVLPSTSS) and 333 to 345 (PPSSTSIQQPSTS). Residues 396–519 (LSTAQISRLA…GYNYAKSRKR (124 aa)) form an NCD2 region. The span at 573–582 (EKMKGELPES) shows a compositional bias: basic and acidic residues.

The protein belongs to the NAB family. As to quaternary structure, interacts with transcription factor lin-29 (via C-terminus).

Its subcellular location is the nucleus. Functionally, transcriptional cofactor. Heterochronic protein, involved in timing of a subset of differentiation events during the larval-to-adult transition. Promotes hypodermal terminal differentiation, together with transcription factor lin-29, perhaps as part of a transcriptional complex. Involved in regulating molting by repressing the expression of nuclear hormone receptors nhr-23 and nhr-25 in the adult hypoderm, probably acting in concert with lin-29. In Caenorhabditis elegans, this protein is NAB transcription cofactor mab-10.